A 496-amino-acid chain; its full sequence is Glutamate--tRNA ligase (496 aa).

The short motif at 12–22 is the 'HIGH' region element; it reads PSPTGTPHVGL. The short motif at 256–260 is the 'KMSKS' region element; sequence KLSKR. Residue Lys-259 coordinates ATP.

Belongs to the class-I aminoacyl-tRNA synthetase family. Glutamate--tRNA ligase type 1 subfamily. As to quaternary structure, monomer.

It localises to the cytoplasm. The catalysed reaction is tRNA(Glu) + L-glutamate + ATP = L-glutamyl-tRNA(Glu) + AMP + diphosphate. In terms of biological role, catalyzes the attachment of glutamate to tRNA(Glu) in a two-step reaction: glutamate is first activated by ATP to form Glu-AMP and then transferred to the acceptor end of tRNA(Glu). In Mycobacteroides abscessus (strain ATCC 19977 / DSM 44196 / CCUG 20993 / CIP 104536 / JCM 13569 / NCTC 13031 / TMC 1543 / L948) (Mycobacterium abscessus), this protein is Glutamate--tRNA ligase.